Here is a 633-residue protein sequence, read N- to C-terminus: Protein arginine N-methyltransferase 5 (633 aa).

In terms of domain architecture, SAM-dependent MTase PRMT-type spans 304–611; sequence LQSPLQPLMD…NNGKKVWYEW (308 aa). Tyr-320 contributes to the S-adenosyl-L-methionine binding site. An a protein-binding site is contributed by Phe-323. Residues 329 to 330, Glu-388, and 414 to 416 each bind S-adenosyl-L-methionine; these read KY and GDM. The a protein site is built by Glu-431 and Glu-440. Catalysis depends on proton donor/acceptor residues Glu-431 and Glu-440. Glu-440 is an S-adenosyl-L-methionine binding site.

This sequence belongs to the class I-like SAM-binding methyltransferase superfamily. Protein arginine N-methyltransferase family. As to quaternary structure, heterotetramer; dimer of heterodimer with wdr77. Interacts with wee2-a; this interaction is disrupted upon activation of the DNA replication checkpoint. In terms of tissue distribution, detected in egg (at protein level).

The protein resides in the cytoplasm. The protein localises to the nucleus. Its subcellular location is the cytosol. It catalyses the reaction L-arginyl-[protein] + 2 S-adenosyl-L-methionine = N(omega),N(omega)'-dimethyl-L-arginyl-[protein] + 2 S-adenosyl-L-homocysteine + 2 H(+). Arginine methyltransferase that can both catalyze the formation of omega-N monomethylarginine (MMA) and symmetrical dimethylarginine (sDMA), with a preference for the formation of MMA. Specifically mediates the symmetrical dimethylation of arginine residues in the small nuclear ribonucleoproteins; such methylation being required for the assembly and biogenesis of snRNP core particles. Methylates the arginine in the motif G-R-G-X-G in its substrates histone H2A, H2AX and H4, producing both monomethylated and symmetrically dimethylated 'Arg-3'. Methylates nucleoplasmin at 'Arg-192', producing both monomethylated and symmetrically dimethylated 'Arg-192'. Involved in the DNA replication checkpoint. Promotes entry into mitosis by promoting the proteasomal degradation of wee2-a. May act as a transcriptional corepressor in CRY1-mediated repression of the core circadian component PER1. Involved in spliceosome maturation and mRNA splicing. The sequence is that of Protein arginine N-methyltransferase 5 (prmt5) from Xenopus laevis (African clawed frog).